Here is an 89-residue protein sequence, read N- to C-terminus: MGFTDETVRFKLDDGDKKEISETLTAVYHSLEEKGYNPINQIVGYVLSGDPAYVPRYNDARNQIRKYERDEIVEELVRYYLQGNGIDVK.

This sequence belongs to the UPF0297 family.

This Streptococcus uberis (strain ATCC BAA-854 / 0140J) protein is UPF0297 protein SUB1776.